The chain runs to 698 residues: MSDPSLYINRELSWLHFNRRVLDEAIRQDQHPLIERVKFIAIFSSNLDEFFMIRVAGIEKQVEAGIRKKTIDGLTPSEQLERIRAEVIEQLKLRNTCLYGDILPALAAEGITFVHFADLPEKEQAVLNAWFRKEIYPVLTPLAFDTGHPFPFMSNLSLNLAIELDEVEHGNLKFARVKVPSVLPRLLKLNDIEGLGNDPSCMRFLWIEELIQQNLGLLFPTMKIVQSHQFRIIRNADIEIEEDEAGDLLQTIEKGVRSRRYGNVVRLDISPEMPDFVRQLLINNLEIEEKNVYEIDGALGMSCLMELLDIDRPSLKDEPFIPFNMFEEQRNGDIFSAISSGDLLFYHPYDSFKPVVDFIDRAASDPDVLSIKQTLYRVGSNSPIVKALMKAAESGKQVAVLVELKARFDEENNIGWARALEDVGAHVIYGLPGLKTHAKLTLVVRREPQGLKRYLHLGTGNYNPSTGKLYTDYSFFTDDELLAGEVSELFNALTGYFRYTGYRFLLVSPINTRKRIIEMIEREIALARKSSGGRIIMKMNSLVDPATIQALYRASRAGVQIDLVVRGICCLKPGIPGVSENIRVISIIGRYLEHSRAYYFANGGSPELYLGSADIMPRNLDDRVETLFPVFDPSLVERVRNDLELQLSDNLKAWKIGPDGNWTLVRNDAPKVNSQERFMKRRTQKKKTTGIKGRLGLN.

An ATP-binding site is contributed by asparagine 46. The Mg(2+) site is built by arginine 377 and arginine 407. Histidine 437 serves as the catalytic Phosphohistidine intermediate. ATP-binding residues include tyrosine 470, arginine 566, and histidine 594.

This sequence belongs to the polyphosphate kinase 1 (PPK1) family. Requires Mg(2+) as cofactor. An intermediate of this reaction is the autophosphorylated ppk in which a phosphate is covalently linked to a histidine residue through a N-P bond.

It carries out the reaction [phosphate](n) + ATP = [phosphate](n+1) + ADP. Its function is as follows. Catalyzes the reversible transfer of the terminal phosphate of ATP to form a long-chain polyphosphate (polyP). The chain is Polyphosphate kinase 1 from Chlorobaculum tepidum (strain ATCC 49652 / DSM 12025 / NBRC 103806 / TLS) (Chlorobium tepidum).